We begin with the raw amino-acid sequence, 424 residues long: UDP-N-acetylglucosamine 1-carboxyvinyltransferase (424 aa).

22–23 is a binding site for phosphoenolpyruvate; the sequence is KN. Residue arginine 93 coordinates UDP-N-acetyl-alpha-D-glucosamine. Cysteine 117 serves as the catalytic Proton donor. Cysteine 117 is modified (2-(S-cysteinyl)pyruvic acid O-phosphothioketal). UDP-N-acetyl-alpha-D-glucosamine is bound by residues 122–126, aspartate 307, and valine 329; that span reads RPIDL.

It belongs to the EPSP synthase family. MurA subfamily.

Its subcellular location is the cytoplasm. The enzyme catalyses phosphoenolpyruvate + UDP-N-acetyl-alpha-D-glucosamine = UDP-N-acetyl-3-O-(1-carboxyvinyl)-alpha-D-glucosamine + phosphate. The protein operates within cell wall biogenesis; peptidoglycan biosynthesis. Cell wall formation. Adds enolpyruvyl to UDP-N-acetylglucosamine. The protein is UDP-N-acetylglucosamine 1-carboxyvinyltransferase of Chlorobium limicola (strain DSM 245 / NBRC 103803 / 6330).